Reading from the N-terminus, the 412-residue chain is MIMHLGLMMVVGLTLCLMHGQALLQVPEHPFSVVWNVPSARCKAHFGVHLPLDALGIVANHGQHFHGQNISIFYKNQFGLYPYFGPRGTAHNGGIPQAVSLDHHLARAAHQILHSLGSSFAGLAVLDWEEWYPLWAGNWGPHRQVYLAASWVWTQQMFPGLDPQEQLHKAHTSFEQAARALMEYTLQLGRTLRPSGLWGFYRYPACGNGWHKMASNYTGHCHAAITTRNTQLRWLWAASSALFPSIYLPPRLPLAYRQAFVRHRLEEAFRVALLEHSHPLPVLAYSRLTHRSSGRFLSLDDLMQTIGVSAALGTAGVVLWGDLSFSSSEEKCWRLHDYLVGTLGPYVINVTKAAMACSHQRCHGHGRCARKDPGQMEAFLHLQPDDSLGAWNSFRCHCYSGWAGPTCLEPKP.

The signal sequence occupies residues 1–22; it reads MIMHLGLMMVVGLTLCLMHGQA. Disulfide bonds link Cys42–Cys332, Cys206–Cys221, Cys357–Cys368, Cys362–Cys396, and Cys398–Cys407. A glycan (N-linked (GlcNAc...) asparagine) is linked at Asn69. Glu129 functions as the Proton donor in the catalytic mechanism. N-linked (GlcNAc...) asparagine glycosylation occurs at Asn216. The EGF-like domain maps to 353 to 408; the sequence is AAMACSHQRCHGHGRCARKDPGQMEAFLHLQPDDSLGAWNSFRCHCYSGWAGPTCL.

It belongs to the glycosyl hydrolase 56 family. N-glycosylated. Expressed in testis, epididymal tissue, epididymal luminal fluid (ELF), acrosome-intact (AI) sperm and caput (CAP), corpus (COR) and caudal (CAU) sperm. Higher expression in sperm than testis (at protein level). Liver, kidney, skin, brain, stomach and testis. Expressed mainly in granulosa cells of the ovaries. Expressed in small and large antral follicles. Not present in theca or stroma cells. Expressed in testis and liver. Expressed in testis and CAP, COR, and CAU epididymis tissue.

Its subcellular location is the secreted. It localises to the cell membrane. The protein resides in the cytoplasmic vesicle. It is found in the secretory vesicle. The protein localises to the acrosome. Its subcellular location is the endoplasmic reticulum. It localises to the early endosome. It catalyses the reaction Random hydrolysis of (1-&gt;4)-linkages between N-acetyl-beta-D-glucosamine and D-glucuronate residues in hyaluronate.. Facilitates sperm penetration into the layer of cumulus cells surrounding the egg by digesting hyaluronic acid. Involved in induction of the acrosome reaction in the sperm. Involved in follicular atresia, the breakdown of immature ovarian follicles that are not selected to ovulate. Induces ovarian granulosa cell apoptosis, possibly via apoptotic signaling pathway involving CASP8 and CASP3 activation, and poly(ADP-ribose) polymerase (PARP) cleavage. Has no hyaluronidase activity in embryonic fibroblasts in vitro. Has no hyaluronidase activity in granulosa cells in vitro. In Mus musculus (Mouse), this protein is Hyaluronidase-3 (Hyal3).